The primary structure comprises 502 residues: Glycerol kinase (502 aa).

An ADP-binding site is contributed by threonine 14. Positions 14, 15, and 16 each coordinate ATP. Threonine 14 serves as a coordination point for sn-glycerol 3-phosphate. Position 18 (arginine 18) interacts with ADP. Sn-glycerol 3-phosphate is bound by residues arginine 84, glutamate 85, tyrosine 136, and aspartate 246. The glycerol site is built by arginine 84, glutamate 85, tyrosine 136, aspartate 246, and glutamine 247. Residues threonine 268 and glycine 311 each contribute to the ADP site. Residues threonine 268, glycine 311, glutamine 315, and glycine 412 each coordinate ATP. Residues glycine 412 and asparagine 416 each contribute to the ADP site.

Belongs to the FGGY kinase family. As to quaternary structure, homotetramer and homodimer (in equilibrium). Heterodimer with EIIA-Glc. Binds 1 zinc ion per glycerol kinase EIIA-Glc dimer. The zinc ion is important for dimerization.

The enzyme catalyses glycerol + ATP = sn-glycerol 3-phosphate + ADP + H(+). It functions in the pathway polyol metabolism; glycerol degradation via glycerol kinase pathway; sn-glycerol 3-phosphate from glycerol: step 1/1. Activity of this regulatory enzyme is affected by several metabolites. Allosterically and non-competitively inhibited by fructose 1,6-bisphosphate (FBP) and unphosphorylated phosphocarrier protein EIIA-Glc (III-Glc), an integral component of the bacterial phosphotransferase (PTS) system. In terms of biological role, key enzyme in the regulation of glycerol uptake and metabolism. Catalyzes the phosphorylation of glycerol to yield sn-glycerol 3-phosphate. The polypeptide is Glycerol kinase (Shigella dysenteriae serotype 1 (strain Sd197)).